We begin with the raw amino-acid sequence, 358 residues long: 3-dehydroquinate synthase (358 aa).

Residues 70 to 75 (DGEQYK), 104 to 108 (GVIGD), 128 to 129 (TT), lysine 141, lysine 150, and 168 to 171 (CLHT) contribute to the NAD(+) site. Residues glutamate 183, histidine 246, and histidine 263 each contribute to the Zn(2+) site.

The protein belongs to the sugar phosphate cyclases superfamily. Dehydroquinate synthase family. Co(2+) is required as a cofactor. It depends on Zn(2+) as a cofactor. The cofactor is NAD(+).

Its subcellular location is the cytoplasm. It carries out the reaction 7-phospho-2-dehydro-3-deoxy-D-arabino-heptonate = 3-dehydroquinate + phosphate. The protein operates within metabolic intermediate biosynthesis; chorismate biosynthesis; chorismate from D-erythrose 4-phosphate and phosphoenolpyruvate: step 2/7. In terms of biological role, catalyzes the conversion of 3-deoxy-D-arabino-heptulosonate 7-phosphate (DAHP) to dehydroquinate (DHQ). The sequence is that of 3-dehydroquinate synthase from Shewanella loihica (strain ATCC BAA-1088 / PV-4).